The following is a 2850-amino-acid chain: Hornerin (2850 aa).

The segment at 1-81 (MPKLLQGVIT…TEYLLMIFKL (81 aa)) is S-100-like. 2 consecutive EF-hand domains span residues 13–48 (DVFYQYATQHGEYDTLNKAELKELLENEFHQILKNP) and 49–84 (NDPDTVDIILQSLDRDHNKKVDFTEYLLMIFKLVQA). The Ca(2+) site is built by Thr27, Glu32, Asp62, Asp64, Asn66, Lys68, and Glu73. A run of 13 repeats spans residues 97–187 (SGSK…SDSH), 188–278 (QSSG…SSSG), 279–369 (SSSS…SGSG), 370–460 (HSSS…SGSG), 474–566 (HSSG…YGSG), 593–683 (QSSG…SGSG), 685–747 (SSSN…SSSG), 748–836 (LSSS…SASG), 839–875 (SSQGRHGSTSGQSSSSGQHDSSSGQSSSYGQHESASH), 876–965 (HASG…SRSG), 966–1004 (QSSRSEQHGSSSGSSSSYGQHGSGSRQSLGHGQHGSGSG), 1007–1097 (PSPS…ASSG), and 1098–1188 (QSSS…SGSG). Basic and acidic residues predominate over residues 100 to 110 (KLRDDTHQHQE). Disordered regions lie at residues 100–154 (KLRD…GTES) and 166–2817 (SGQH…KGGS). The span at 125 to 144 (SSFSHSSWSAGENDSYSRNV) shows a compositional bias: polar residues. Low complexity-rich tracts occupy residues 167–192 (GQHNSYSGQSSSYGEQNSDSHQSSGR) and 226–248 (GQSSGFSQHKSSSGQSSGYSQHG). Residues 249–259 (SGSGHSSGYGQ) show a composition bias toward gly residues. Low complexity-rich tracts occupy residues 276–308 (SSGSSSSYGQHGSGSRQSLGHGRQGSGSRQSPS) and 317–421 (GHSS…SGSG). Over residues 422-433 (QSPGHGQRGSGS) the composition is skewed to gly residues. Low complexity-rich tracts occupy residues 449 to 465 (SSSSGPYVSGSGYSSGF) and 473 to 482 (EHSSGYTQHG). The segment covering 483–493 (SGSGHSSGHGQ) has biased composition (gly residues). Low complexity-rich tracts occupy residues 494–529 (HGSRSGQSSRGERQGSSAGSSSSYGQHGSGSRQSLG), 555–661 (SSSY…QSPS), 670–724 (GHSS…SHSS), 732–765 (RSGQSSRSEQHGSSSGLSSSYGQHGSGSHQSSGH), 782–806 (GSSSGHSSSHGQHGSGTSCSSSCGH), and 818–871 (GQHE…GQHE). Phosphoserine is present on residues Ser659 and Ser661. Over residues 884–900 (GSGSGQSPGHGQRGSGS) the composition is skewed to gly residues. Position 890 is a phosphoserine (Ser890). 2 stretches are compositionally biased toward low complexity: residues 901-921 (GQSPSYGRHGSGSGRSSSSGR) and 931-996 (GFGH…SLGH). A phosphoserine mark is found at Ser993 and Ser1008. 2 stretches are compositionally biased toward low complexity: residues 1019–1050 (GQSSSYGPYRSGSGWSSSRGPYESGSGHSSGL) and 1057–1115 (SGQS…SSGY). The segment covering 1116 to 1132 (GRQGSGSGQSPGHGQRG) has biased composition (gly residues). 2 stretches are compositionally biased toward low complexity: residues 1133–1156 (SGSRQSPSYGRHGSGSGRSSSSGQ) and 1166–1184 (GFGHHESSSGQSSSYSQHG). A compositionally biased stretch (gly residues) spans 1185-1195 (SGSGHSSGYGQ). Arg1205 is modified (omega-N-methylarginine). Composition is skewed to low complexity over residues 1211-1232 (SSSGSSSHYGQHGSGSRQSSGH) and 1253-1276 (GHSSSHGQHGSGSGRSSSRGPYES). The stretch at 1215-1305 (SSSHYGQHGS…AYSQHGSGSG (91 aa)) is repeat 14. Over residues 1280-1301 (HSSVFGQHESGSGHSSAYSQHG) the composition is skewed to polar residues. Composition is skewed to low complexity over residues 1309 to 1322 (SQGQHGSTSGQSST), 1331 to 1349 (GQSSSYGHRGSGSSQSSGY), 1370 to 1390 (GHSSSYGQHGSGSGWSSSSGR), 1400 to 1438 (GFGHHESSSWQSSGCTQHGSGSGHSSSYEQHGSRSGQSS), and 1445 to 1466 (SSSGSSSSYGQHGSGSRQSLGH). A run of 16 repeats spans residues 1332–1422 (QSSS…SGSG), 1423–1474 (HSSS…SGSG), 1477–1567 (PSPS…ASSG), 1568–1658 (QSSS…SGSG), 1685–1775 (SSSR…SGSG), 1802–1892 (QSSS…SGSG), 1893–1944 (HSSS…SGSG), 1947–2037 (PSPS…ASSG), 2038–2128 (QSSS…SGSG), 2155–2245 (SSSR…SGSG), 2272–2362 (QSSS…SGSG), 2363–2414 (HSSS…SGSG), 2417–2507 (PSPS…ASSG), 2508–2598 (QSSS…SGSG), 2625–2715 (SSSH…SGSG), and 2716–2806 (HFCS…SGSG). 2 positions are modified to phosphoserine: Ser1463 and Ser1478. Low complexity-rich tracts occupy residues 1489 to 1520 (GQSSSYSPYGSGSGWSSSRGPYESGSSHSSGL) and 1527 to 1585 (SGQS…SSGY). Positions 1586 to 1602 (GRQGSGSGQSPGHGQRG) are enriched in gly residues. Low complexity-rich tracts occupy residues 1603 to 1626 (SGSRQSPSYGRHGSGSGRSSSSGQ) and 1636 to 1654 (GFGHHESSSGQSSSYSQHG). Gly residues predominate over residues 1655-1665 (SGSGHSSGYGQ). Positions 1682–1702 (SSRSSSRYGQHGSGSRQSSGH) are enriched in low complexity. Ser1712 and Ser1714 each carry phosphoserine. Low complexity predominate over residues 1723–1746 (GHSSSHGQHGSGSGRSSSRGPYES). Over residues 1750-1771 (HSSVFGQHESGSGHSSAYSQHG) the composition is skewed to polar residues. Low complexity-rich tracts occupy residues 1779 to 1831 (SQGQ…QSPS), 1840 to 1860 (GHSSSYGQHGSGSGWSSSSGR), and 1870 to 1936 (GFGH…SLGH). 2 positions are modified to phosphoserine: Ser1829 and Ser1831. Residues Ser1933 and Ser1948 each carry the phosphoserine modification. 2 stretches are compositionally biased toward low complexity: residues 1959 to 1990 (GQSSSYGPYGSGSGWSSSRGPYESGSGHSSGL) and 1997 to 2055 (SGQS…SSGY). The span at 2056–2072 (GRQGSGSGQSPGHGQRG) shows a compositional bias: gly residues. 2 stretches are compositionally biased toward low complexity: residues 2073-2096 (SGSRQSPSYGRHGSGSGRSSSSGQ) and 2106-2124 (GFGHHESSSGQSSSYSQHG). A compositionally biased stretch (gly residues) spans 2125–2135 (SGSGHSSGYGQ). Low complexity-rich tracts occupy residues 2151–2172 (SSSGSSSRYGQHGSGSRQSSGH) and 2193–2216 (GHSSSHGQHGSGSGRSSSRGPYES). Over residues 2220–2241 (HSSVFGQHESGSGHSSAYSQHG) the composition is skewed to polar residues. Composition is skewed to low complexity over residues 2249 to 2301 (SQGQ…QSPS), 2310 to 2330 (GHSSSYGQHGSGSGWSSSSGR), 2340 to 2378 (GFGHHESSSWQSSGYTQHGSGSGHSSSYEQHGSRSGQSS), and 2385 to 2406 (SSSGSSSSYGQHGSGSRQSLGH). A phosphoserine mark is found at Ser2299 and Ser2301. Ser2403 and Ser2418 each carry phosphoserine. Composition is skewed to low complexity over residues 2429-2460 (GQSSSYSPYGSGSGWSSSRGPYESGSGHSSGL) and 2467-2525 (SGQS…SSGY). Positions 2526-2542 (GRQGSGSGQSPGHGQRG) are enriched in gly residues. Low complexity-rich tracts occupy residues 2543 to 2566 (SGSRQSPSYGRHGSGSGRSSSSGQ) and 2576 to 2594 (GFGHHESSSGQSSSYSQHG). The segment covering 2595–2605 (SGSGHSSGYGQ) has biased composition (gly residues). The segment covering 2621–2642 (SSSGSSSHYGQHGSGSRQSSGH) has biased composition (low complexity). Phosphoserine is present on residues Ser2652 and Ser2654. Residues 2663–2682 (GHSSSHGQHGSGSGRSSSRG) show a composition bias toward low complexity. Residues 2698–2711 (ESGSGHSSAYSQHG) are compositionally biased toward polar residues. Composition is skewed to low complexity over residues 2719–2732 (SQGQHGSTSGQSST), 2741–2759 (GQSSSYGHRGSGSSQSSGY), and 2795–2816 (SSGYSQHGSGSGQDGYSYCKGG).

The protein belongs to the S100-fused protein family. It in the N-terminal section; belongs to the S-100 family. Post-translationally, processed during the process of epidermal differentiation. Forms covalent cross-links mediated by transglutaminase TGM3, between glutamine and the epsilon-amino group of lysine residues (in vitro). In terms of tissue distribution, expressed in cornified epidermis, psoriatic and regenerating skin after wounding. Found in the upper granular layer and in the entire cornified layer of epidermis.

The protein resides in the cytoplasmic granule. In terms of biological role, component of the epidermal cornified cell envelopes. In Homo sapiens (Human), this protein is Hornerin (HRNR).